Here is a 262-residue protein sequence, read N- to C-terminus: tRNA pseudouridine synthase A (262 aa).

The active-site Nucleophile is the D54. Substrate is bound at residue Y113.

The protein belongs to the tRNA pseudouridine synthase TruA family. In terms of assembly, homodimer.

It catalyses the reaction uridine(38/39/40) in tRNA = pseudouridine(38/39/40) in tRNA. In terms of biological role, formation of pseudouridine at positions 38, 39 and 40 in the anticodon stem and loop of transfer RNAs. This Lactobacillus acidophilus (strain ATCC 700396 / NCK56 / N2 / NCFM) protein is tRNA pseudouridine synthase A.